A 389-amino-acid chain; its full sequence is Chalcone synthase 6 (389 aa).

Cys-164 is an active-site residue.

This sequence belongs to the thiolase-like superfamily. Chalcone/stilbene synthases family.

It carries out the reaction (E)-4-coumaroyl-CoA + 3 malonyl-CoA + 3 H(+) = 2',4,4',6'-tetrahydroxychalcone + 3 CO2 + 4 CoA. It participates in secondary metabolite biosynthesis; flavonoid biosynthesis. In terms of biological role, the primary product of this enzyme is 4,2',4',6'-tetrahydroxychalcone (also termed naringenin-chalcone or chalcone) which can under specific conditions spontaneously isomerize into naringenin. This chain is Chalcone synthase 6 (CHS6), found in Pisum sativum (Garden pea).